A 119-amino-acid chain; its full sequence is NADH-quinone oxidoreductase subunit A (119 aa).

The next 3 membrane-spanning stretches (helical) occupy residues 7–27 (FPVL…VSIG), 63–83 (LVAI…PWGV), and 88–108 (IGWP…LGFA).

This sequence belongs to the complex I subunit 3 family. In terms of assembly, NDH-1 is composed of 14 different subunits. Subunits NuoA, H, J, K, L, M, N constitute the membrane sector of the complex.

Its subcellular location is the cell inner membrane. It catalyses the reaction a quinone + NADH + 5 H(+)(in) = a quinol + NAD(+) + 4 H(+)(out). Its function is as follows. NDH-1 shuttles electrons from NADH, via FMN and iron-sulfur (Fe-S) centers, to quinones in the respiratory chain. The immediate electron acceptor for the enzyme in this species is believed to be ubiquinone. Couples the redox reaction to proton translocation (for every two electrons transferred, four hydrogen ions are translocated across the cytoplasmic membrane), and thus conserves the redox energy in a proton gradient. This Paraburkholderia xenovorans (strain LB400) protein is NADH-quinone oxidoreductase subunit A.